Consider the following 227-residue polypeptide: Cytochrome c oxidase subunit 2 (227 aa).

Residues 1 to 14 (MAYPMQLGFQDATS) lie on the Mitochondrial intermembrane side of the membrane. The chain crosses the membrane as a helical span at residues 15 to 45 (PIMEELLHFHDHTLMIVFLISSLVLYIISLM). The Mitochondrial matrix portion of the chain corresponds to 46-59 (LTTKLTHTSTMDAQ). The chain crosses the membrane as a helical span at residues 60 to 87 (EVETIWTILPAIILILIALPSLRILYMM). Topologically, residues 88–227 (DEINNPSLTV…YFEKWSASML (140 aa)) are mitochondrial intermembrane. Residues His161, Cys196, Glu198, Cys200, His204, and Met207 each coordinate Cu cation. Residue Glu198 coordinates Mg(2+). Tyr218 carries the post-translational modification Phosphotyrosine.

It belongs to the cytochrome c oxidase subunit 2 family. As to quaternary structure, component of the cytochrome c oxidase (complex IV, CIV), a multisubunit enzyme composed of 14 subunits. The complex is composed of a catalytic core of 3 subunits MT-CO1, MT-CO2 and MT-CO3, encoded in the mitochondrial DNA, and 11 supernumerary subunits COX4I, COX5A, COX5B, COX6A, COX6B, COX6C, COX7A, COX7B, COX7C, COX8 and NDUFA4, which are encoded in the nuclear genome. The complex exists as a monomer or a dimer and forms supercomplexes (SCs) in the inner mitochondrial membrane with NADH-ubiquinone oxidoreductase (complex I, CI) and ubiquinol-cytochrome c oxidoreductase (cytochrome b-c1 complex, complex III, CIII), resulting in different assemblies (supercomplex SCI(1)III(2)IV(1) and megacomplex MCI(2)III(2)IV(2)). Found in a complex with TMEM177, COA6, COX18, COX20, SCO1 and SCO2. Interacts with TMEM177 in a COX20-dependent manner. Interacts with COX20. Interacts with COX16. The cofactor is Cu cation.

Its subcellular location is the mitochondrion inner membrane. The enzyme catalyses 4 Fe(II)-[cytochrome c] + O2 + 8 H(+)(in) = 4 Fe(III)-[cytochrome c] + 2 H2O + 4 H(+)(out). Its function is as follows. Component of the cytochrome c oxidase, the last enzyme in the mitochondrial electron transport chain which drives oxidative phosphorylation. The respiratory chain contains 3 multisubunit complexes succinate dehydrogenase (complex II, CII), ubiquinol-cytochrome c oxidoreductase (cytochrome b-c1 complex, complex III, CIII) and cytochrome c oxidase (complex IV, CIV), that cooperate to transfer electrons derived from NADH and succinate to molecular oxygen, creating an electrochemical gradient over the inner membrane that drives transmembrane transport and the ATP synthase. Cytochrome c oxidase is the component of the respiratory chain that catalyzes the reduction of oxygen to water. Electrons originating from reduced cytochrome c in the intermembrane space (IMS) are transferred via the dinuclear copper A center (CU(A)) of subunit 2 and heme A of subunit 1 to the active site in subunit 1, a binuclear center (BNC) formed by heme A3 and copper B (CU(B)). The BNC reduces molecular oxygen to 2 water molecules using 4 electrons from cytochrome c in the IMS and 4 protons from the mitochondrial matrix. The polypeptide is Cytochrome c oxidase subunit 2 (MT-CO2) (Boselaphus tragocamelus (Nilgai)).